The following is a 2528-amino-acid chain: Squalestatin tetraketide synthase clz2 (2528 aa).

Residues 14–409 (TVPIAIVGMS…GANAHVILES (396 aa)) form the Ketosynthase family 3 (KS3) domain. Catalysis depends on for beta-ketoacyl synthase activity residues C187, H291, and H331. The disordered stretch occupies residues 420 to 457 (VNGHHQKNGTTNGHKGANGTTNELNGTNGTANGHDITT). Residues 436 to 452 (ANGTTNELNGTNGTANG) show a composition bias toward low complexity. The malonyl-CoA:ACP transacylase (MAT) domain stretch occupies residues 538–856 (GAQWFAMGRE…PYLSCLLRGQ (319 aa)). The tract at residues 925-1063 (HDLLGSLIPG…GRIAIELDTS (139 aa)) is N-terminal hotdog fold. Positions 925 to 1239 (HDLLGSLIPG…NQSVGQIALQ (315 aa)) constitute a PKS/mFAS DH domain. A dehydratase (DH) domain region spans residues 925-1239 (HDLLGSLIPG…NQSVGQIALQ (315 aa)). Catalysis depends on H957, which acts as the Proton acceptor; for dehydratase activity. The interval 1083 to 1239 (TRSVDPSNLY…NQSVGQIALQ (157 aa)) is C-terminal hotdog fold. D1148 (proton donor; for dehydratase activity) is an active-site residue. The segment at 1390–1590 (LYRYYTDAIK…GLDVELRDCD (201 aa)) is methyltransferase (CMet) domain. The interval 1817 to 2130 (GLIDTLQFSK…AGKHMGKIVI (314 aa)) is enoyl reductase (ER) (ER) domain. The tract at residues 2153-2331 (ASYLIVGGLG…AVSIDLGMVQ (179 aa)) is ketoreductase (KR) domain. The segment at 2408-2430 (RARDAKEQSNSQGGGTDSKISPG) is disordered. In terms of domain architecture, Carrier spans 2441-2518 (EAIDVVGRAI…ALATTVATKS (78 aa)). S2478 bears the O-(pantetheine 4'-phosphoryl)serine mark.

It participates in secondary metabolite biosynthesis. In terms of biological role, highly reducing polyketide synthase (HR-PKS); part of the gene cluster that mediates the biosynthesis of squalestatin S1 (SQS1, also known as zaragozic acid A), a heavily oxidized fungal polyketide that offers potent cholesterol lowering activity by targeting squalene synthase (SS). SQS1 is composed of a 2,8-dioxobicyclic[3.2.1]octane-3,4,5-tricarboxyclic acid core that is connected to two lipophilic polyketide arms. These initial steps feature the priming of an unusual benzoic acid starter unit onto the highly reducing polyketide synthase clz14, followed by oxaloacetate extension and product release to generate a tricarboxylic acid containing product. The phenylalanine ammonia lyase (PAL) clz10 and the acyl-CoA ligase clz12 are involved in transforming phenylalanine into benzoyl-CoA. The citrate synthase-like protein clz17 is involved in connecting the C-alpha-carbons of the hexaketide chain and oxaloacetate to afford the tricarboxylic acid unit. The potential hydrolytic enzymes, clz11 and clz13, are in close proximity to pks2 and may participate in product release. On the other side, the tetraketide arm is synthesized by a the squalestatin tetraketide synthase clz2 and enzymatically esterified to the core in the last biosynthetic step, by the acetyltransferase clz6. The biosynthesis of the tetraketide must involve 3 rounds of chain extension. After the first and second rounds methyl-transfer occurs, and in all rounds of extension the ketoreductase and dehydratase are active. The enoyl reductase and C-MeT of clz2 are not active in the final round of extension. The acetyltransferase clz6 appears to have a broad substrate selectivity for its acyl CoA substrate, allowing the in vitro synthesis of novel squalestatins. The biosynthesis of SQS1 requires several oxidative steps likely performed by oxidoreductases clz3, clz15 and clz16. Finally, in support of the identification of the cluster as being responsible for SQS1 production, the cluster contains a gene encoding a putative squalene synthase (SS) clz20, suggesting a likely mechanism for self-resistance. This Cochliobolus lunatus (Filamentous fungus) protein is Squalestatin tetraketide synthase clz2.